We begin with the raw amino-acid sequence, 287 residues long: Rhomboid-like protein 18 (287 aa).

6 helical membrane-spanning segments follow: residues 10–30 (NAPVTKAFVIATALFTVFFGI), 53–73 (LIISAFAFSSTTQLLSGLYLL), 90–110 (VFIFFSGFVSLILETILLSLT), 117–137 (LLTSGPYALVFASFVPFFLDI), 145–165 (VLGVHFSDKSFIYLAGVQLLL), and 172–192 (IFTGICGIIAGSLYRLNIFGI). The 41-residue stretch at 244–284 (EPSEEAIATLVSMGFDQNAARQALVHARNDVNAATNILLEA) folds into the UBA domain.

It belongs to the peptidase S54 family.

Its subcellular location is the membrane. In terms of biological role, probable rhomboid-type serine protease that catalyzes intramembrane proteolysis. The protein is Rhomboid-like protein 18 of Arabidopsis thaliana (Mouse-ear cress).